Reading from the N-terminus, the 290-residue chain is S-methyl-5'-thioadenosine phosphorylase (290 aa).

Phosphate contacts are provided by residues S11, 53–54 (RH), and 86–87 (SA). M184 contacts substrate. T185 is a binding site for phosphate. Residue 208-210 (DYD) participates in substrate binding.

It belongs to the PNP/MTAP phosphorylase family. MTAP subfamily. Homohexamer. Dimer of a homotrimer.

It carries out the reaction S-methyl-5'-thioadenosine + phosphate = 5-(methylsulfanyl)-alpha-D-ribose 1-phosphate + adenine. It functions in the pathway amino-acid biosynthesis; L-methionine biosynthesis via salvage pathway; S-methyl-5-thio-alpha-D-ribose 1-phosphate from S-methyl-5'-thioadenosine (phosphorylase route): step 1/1. Its function is as follows. Catalyzes the reversible phosphorylation of S-methyl-5'-thioadenosine (MTA) to adenine and 5-methylthioribose-1-phosphate. Involved in the breakdown of MTA, a major by-product of polyamine biosynthesis. Responsible for the first step in the methionine salvage pathway after MTA has been generated from S-adenosylmethionine. Has broad substrate specificity with 6-aminopurine nucleosides as preferred substrates. In Cereibacter sphaeroides (strain ATCC 17023 / DSM 158 / JCM 6121 / CCUG 31486 / LMG 2827 / NBRC 12203 / NCIMB 8253 / ATH 2.4.1.) (Rhodobacter sphaeroides), this protein is S-methyl-5'-thioadenosine phosphorylase.